A 534-amino-acid polypeptide reads, in one-letter code: MSEVANEASRRRTFAIISHPDAGKTTLTEKLLLFGGAIQMAGSVKGRKAARHATSDWMALEKERGISVTSSVMQFPYEDKIVNLLDTPGHADFGEDTYRVLTAVDSALMVIDVAKGVEERTIKLMEVCRLRDTPIMTFINKLDREGKDPIELLDEVETVLGIQCAPVTWPIGMGQRLKGVVHLLTGEVHLYEPGRNFTRQDSTIFPSIDAPGLAEKIGAQMLADLRDELELVQGASHPFDLEAYRAGKQTPVFFGSGVNNFGVQPLLDFFVEHAPSPQARSTTGREIAPEENKLTGFVFKIQANMDPQHRDRVAFMRVCSGRFSAGMKTFHVRTGKEMKLANALTFMASDREIAAEAWPGDVIGIHNHGTISIGDTFTEGEAVTFTGIPNFAPELFRRARLRDPLKLKQLQKGLAQLSEEGATQFFRPLTSNDLILGAVGVLQFDVAAYRLKDEYGVEATFEPVSVTTARWVHCSNEKKLEEFREKNALNLALDAAGHLVYLAPTRVNLQLAQERSPDVRFSATREAAHTVSVG.

Positions 9–278 (SRRRTFAIIS…FFVEHAPSPQ (270 aa)) constitute a tr-type G domain. GTP contacts are provided by residues 18–25 (SHPDAGKT), 86–90 (DTPGH), and 140–143 (NKLD).

It belongs to the TRAFAC class translation factor GTPase superfamily. Classic translation factor GTPase family. PrfC subfamily.

It localises to the cytoplasm. Functionally, increases the formation of ribosomal termination complexes and stimulates activities of RF-1 and RF-2. It binds guanine nucleotides and has strong preference for UGA stop codons. It may interact directly with the ribosome. The stimulation of RF-1 and RF-2 is significantly reduced by GTP and GDP, but not by GMP. The chain is Peptide chain release factor 3 from Stenotrophomonas maltophilia (strain K279a).